Here is a 233-residue protein sequence, read N- to C-terminus: MNKPIIALDFQTYEEVETFLAKFSGETLSVKVGMELFYSNGPIIVEKIKQQHHEIFLDLKLHDIPNTVKSAMIGLAKLGVDMVNVHAAGGKKMMEAAREGLEIGSSSGKRPKIIAVTQLTSTSETDMQTEQLIKTSLLESVMHYSNLSKQAGLDGVVCSALEAEDIKQQNGADFLRVTPGIRLASDAADDQIRVVTPEKARLIGSSNIVVGRSITRANDPVEAYNQVLKEWNA.

Residues D9, K31, 58 to 67 (DLKLHDIPNT), T120, R182, Q191, G211, and R212 each bind substrate. Catalysis depends on K60, which acts as the Proton donor.

It belongs to the OMP decarboxylase family. Type 1 subfamily. As to quaternary structure, homodimer.

It catalyses the reaction orotidine 5'-phosphate + H(+) = UMP + CO2. It participates in pyrimidine metabolism; UMP biosynthesis via de novo pathway; UMP from orotate: step 2/2. Its function is as follows. Catalyzes the decarboxylation of orotidine 5'-monophosphate (OMP) to uridine 5'-monophosphate (UMP). In Listeria monocytogenes serotype 4b (strain CLIP80459), this protein is Orotidine 5'-phosphate decarboxylase.